The chain runs to 307 residues: Mycothiol acetyltransferase (307 aa).

2 N-acetyltransferase domains span residues 15 to 158 (HTLD…LAEP) and 164 to 307 (VTVR…RTES). Glu-46 provides a ligand contact to 1D-myo-inositol 2-(L-cysteinylamino)-2-deoxy-alpha-D-glucopyranoside. 90-92 (LVV) is a binding site for acetyl-CoA. 1D-myo-inositol 2-(L-cysteinylamino)-2-deoxy-alpha-D-glucopyranoside-binding residues include Glu-191, Lys-230, and Glu-239. Acetyl-CoA is bound by residues 243-245 (VGV) and 250-256 (QGGGLGK). 1D-myo-inositol 2-(L-cysteinylamino)-2-deoxy-alpha-D-glucopyranoside is bound at residue Tyr-277.

This sequence belongs to the acetyltransferase family. MshD subfamily. As to quaternary structure, monomer.

It catalyses the reaction 1D-myo-inositol 2-(L-cysteinylamino)-2-deoxy-alpha-D-glucopyranoside + acetyl-CoA = mycothiol + CoA + H(+). Functionally, catalyzes the transfer of acetyl from acetyl-CoA to desacetylmycothiol (Cys-GlcN-Ins) to form mycothiol. The protein is Mycothiol acetyltransferase of Streptomyces griseus subsp. griseus (strain JCM 4626 / CBS 651.72 / NBRC 13350 / KCC S-0626 / ISP 5235).